The sequence spans 140 residues: Ribosome-binding factor A (140 aa).

The protein belongs to the RbfA family. As to quaternary structure, monomer. Binds 30S ribosomal subunits, but not 50S ribosomal subunits or 70S ribosomes.

The protein localises to the cytoplasm. Its function is as follows. One of several proteins that assist in the late maturation steps of the functional core of the 30S ribosomal subunit. Associates with free 30S ribosomal subunits (but not with 30S subunits that are part of 70S ribosomes or polysomes). Required for efficient processing of 16S rRNA. May interact with the 5'-terminal helix region of 16S rRNA. This is Ribosome-binding factor A from Cereibacter sphaeroides (strain ATCC 17025 / ATH 2.4.3) (Rhodobacter sphaeroides).